Consider the following 385-residue polypeptide: Polyketide synthase 3 (385 aa).

Residue cysteine 157 is part of the active site.

This sequence belongs to the thiolase-like superfamily. Chalcone/stilbene synthases family. Expressed in male and female flowers, and seedlings.

The protein resides in the cytoplasm. Its function is as follows. Polyketide synthase responsible for the biosynthesis of secondary metabolites. In Cannabis sativa (Hemp), this protein is Polyketide synthase 3 (PKSF3).